Here is an 89-residue protein sequence, read N- to C-terminus: Class I hydrophobin D (89 aa).

The N-terminal stretch at 1–16 is a signal peptide; the sequence is MKFSLATIALAAAVVA. Cystine bridges form between Cys28-Cys68, Cys39-Cys60, Cys40-Cys52, and Cys69-Cys85. Asn36 is a glycosylation site (N-linked (GlcNAc...) asparagine).

This sequence belongs to the fungal hydrophobin family.

The protein localises to the secreted. The protein resides in the cell wall. It is found in the vacuole. Its subcellular location is the cytoplasmic vesicle. In terms of biological role, aerial growth, conidiation, and dispersal of filamentous fungi in the environment rely upon a capability of their secreting small amphipathic proteins called hydrophobins (HPBs) with low sequence identity. Class I can self-assemble into an outermost layer of rodlet bundles on aerial cell surfaces, conferring cellular hydrophobicity that supports fungal growth, development and dispersal; whereas Class II form highly ordered films at water-air interfaces through intermolecular interactions but contribute nothing to the rodlet structure. Hyd1D contributes to certain cell wall-related features, such as hydrophobicity but is not involved in cell wall-related events during fungal proliferation in host hemocoel. Does not contribute to conidial hydrophobicity. Involved in insect hemocoel colonization independent of cell hydrophobicity. This Beauveria bassiana (strain ARSEF 2860) (White muscardine disease fungus) protein is Class I hydrophobin D.